Here is a 487-residue protein sequence, read N- to C-terminus: Protein NEN2 (487 aa).

The Exonuclease domain occupies 18 to 179 (FFDVETTIPF…LDDVRMNFEV (162 aa)). Positions 20 and 22 each coordinate Mg(2+). H167 acts as the Proton donor/acceptor in catalysis. Mg(2+) is bound at residue D172. Disordered stretches follow at residues 200 to 233 (NSVT…TGEN) and 269 to 291 (SDVP…GTGD). The span at 221-233 (PLQSPTDQQTGEN) shows a compositional bias: polar residues.

The cofactor is Mg(2+). As to expression, expressed in the sieve elements and phloem pole pericycle cells.

It is found in the cytoplasm. It localises to the nucleus. Probable exonuclease involved in enuclation of sieve elements. The sequence is that of Protein NEN2 from Arabidopsis thaliana (Mouse-ear cress).